A 513-amino-acid chain; its full sequence is ATP synthase subunit alpha (513 aa).

169 to 176 (GDRQTGKT) is a binding site for ATP.

The protein belongs to the ATPase alpha/beta chains family. As to quaternary structure, F-type ATPases have 2 components, CF(1) - the catalytic core - and CF(0) - the membrane proton channel. CF(1) has five subunits: alpha(3), beta(3), gamma(1), delta(1), epsilon(1). CF(0) has three main subunits: a(1), b(2) and c(9-12). The alpha and beta chains form an alternating ring which encloses part of the gamma chain. CF(1) is attached to CF(0) by a central stalk formed by the gamma and epsilon chains, while a peripheral stalk is formed by the delta and b chains.

The protein localises to the cell inner membrane. The enzyme catalyses ATP + H2O + 4 H(+)(in) = ADP + phosphate + 5 H(+)(out). Functionally, produces ATP from ADP in the presence of a proton gradient across the membrane. The alpha chain is a regulatory subunit. The sequence is that of ATP synthase subunit alpha from Actinobacillus pleuropneumoniae serotype 3 (strain JL03).